The sequence spans 2183 residues: MGAQVSTQKTGAHETSLSATGNSIIHYTNINYYKDAASNSANRQDFTQDPSKFTEPVKDVMIKSLPALNSPTVEECGYSDRVRSITLGNSTITTQECANVVVGYGVWPDYLSDEEATAEDQPTQPDVATCRFYTLKSVKWEMQSAGWWWKFPDALSEMGLFGQNMQYHYLGRSGYTIHVQCNASKFHQGCLLVVCVPEAEMGCTNAENAPTYGDLCGGETAKQFEQNAVTGETAVQTAVCNAGMGVGVGNLTIYPHQWINLRTNNSATIVMPYINSVPMDNMFRHNNFTLMIIPFAPLDYVTGASSYIPITVTVAPMSAEYNGLRLAGHQGLPTMLTPGSTQFLTSDDFQSPSAMPQFDVTPEMNIPGQVRNLMEIAEVDSVVPINNLQANLKTMEAYRVQVRSTDEMGGQIFGFPLQPGASSVLQRTLLGEILNYYTHWSGSLKLTFVFCGSAMATGKFLLAYSPPGAGAPDSRKNAMLGTHVIWDVGLQSSCVLCVPWISQTHYRYVVDDKYTASGFISCWYQTNVIVPAEAQKSCYIMCFVSACNDFSVRMLRDTQFIKQDTFYQGPTEESVERAMGRVADTIARGPSNSEQIPALTAVETGHTSQVDPSDTMQTRHVHNYHSRSESSIENFLCRSACVIYIKYSSAESNNLKRYAEWVINTRQVAQLRRKMEMFTYIRCDMEQTFVITSHQEMSTATNSVVPVQTHQIMYVPPGGPVPTSVNDYVWQTSTNPSIFWTEGNAPPRMSIPFMSIGNAYTMFYDGWSNFSRDGIYGYNSLNNMGTIYARHVNDSSPGGLTSTIRIYFKPKHVKAYVRPPRRLCQYKKAKNVNFDVEAVTTERASLVTTGPHGQQSGAVYVGNYRVVNRHLATHFDWQNYIWEDYNRDLLVSTTTAHGCDTIARCQCTSGVYFCVSRNKHYPVVFEGPGLVEVQESEYYPKRYQSHVLLARGFSEPGDCGGILRCEHGVIGIRTMGREGVVGFADVRDLLWLEDDAMEQGVKDYVEELGNSFGSGFTNQICEQVNLLKESLVGQDSILEKSLKALVKIISALVIVVRNHDDLVTVTATLALIGCTTSPWRWLKRKVSQYYGIPMAERQNNNWLKKFTEMTNACKGMEWIAVKIQKFIEWLKVKILPEVKEKHEFLNRLKQLPLLESQIATIEQSAPSQSDQEQLFSNVQYFAHYCRKYAPLYAAEAKRVFSLEKKMSNYIQFKSKCRIEPVCLLLHGSPGAGKSVATNLIGRSLAEKLNSSVYSLPPDPDHFDGYKQQAVVIMDDLCQNPDGKDVSLFCQMVSSVDFVPPMAALEEKGILFTSPFVLASTNAGSINAPTVSDSRALARRFHFDMNIEVISMYSQNGKINMPMSVKTCDEECCPVNFKKCCPLVCGKAIQFIDRRTQVRYSLDMLVTEMFREYNHRHSVGATLEALFQGPPIYREIRISVAPETPPPPAIADLLRSVDSEAVREYCKEKGWLVPEISSTLQIEKHVSRAFICLQALTTFVSVAGIIYIIYKLFAGFQGAYTGMPNQKPKVPTFRQAKVQGPAFEFAVAMMKRNASTVKTEYGEFTMLGIYDRWAVLPRHAKPGPTILMNDQEVGVVDAKELVDKDGTTLELTLLKLNRNEKFRDIRGFLAREEAEVNEAVLAINTSKFPNMYIPVGQVTEYGFLNLGGTPTKRMLMYNFPTRAGQCGGVLMSTGKVLGIHVGGNGHQGFSASLLRHYFNDEQGEIEFIESSKEAGFPVINTPNKTKLEPSVFHHIFEGNKEPAVLRNGDTRLKVNFEEAIFSKYIGNVNTHVDEYMMEAVDHYAGQLATLDISTEPMRLEDAVYGTEGLEALDLTTSAGYPYVTLGIKKRDILSKKTKDLTKLKECMDKYGLNLPMVTYVKDELRSAEKVAKGKSRLIEASSLNDSVAMRQTFGNLYKTFHLNPGIVTGSAVGCDPDLFWSKIPVMLDGHLRAFDYSGYDASLSPVWFACLKLLLEKLGYSHKETNYIDYLCNSHHLYRDKHYFVRGGMPSGCSGTSIFNSMINNIIIRTLMFKVYKGIDLDQFRMIAYGDDVIASYPLPIDASLLAEAGKGYGLIMTPADKGECFNELTWTNVTFLKRYFRADEQYPFLVHPVMPIKDIHESIRWTKDPKNTQYHVRSLCLLAWHNGEQEYEELYPKIRSVPVGRCLTLPAFSTLRRKWLDAF.

A lipid anchor (N-myristoyl glycine; by host) is attached at glycine 2. The Cytoplasmic segment spans residues 2–1493 (GAQVSTQKTG…HVSRAFICLQ (1492 aa)). Residues 566-582 (FYQGPTEESVERAMGRV) form an amphipathic alpha-helix region. Catalysis depends on for protease 2A activity residues histidine 870 and aspartate 888. Zn(2+) is bound by residues cysteine 905 and cysteine 907. The active-site For protease 2A activity is the cysteine 959. Residues cysteine 965 and histidine 967 each coordinate Zn(2+). Residues 1099-1171 (NNNWLKKFTE…EQSAPSQSDQ (73 aa)) form a membrane-binding region. Residues 1099–1237 (NNNWLKKFTE…SPGAGKSVAT (139 aa)) form an oligomerization region. An RNA-binding region spans residues 1120 to 1124 (AVKIQ). The SF3 helicase domain occupies 1203–1359 (EKKMSNYIQF…SMYSQNGKIN (157 aa)). Residues cysteine 1367, cysteine 1379, and cysteine 1384 each contribute to the Zn(2+) site. A C4-type; degenerate zinc finger spans residues 1367–1384 (CDEECCPVNFKKCCPLVC). The tract at residues 1411–1418 (EYNHRHSV) is RNA-binding. The tract at residues 1422–1427 (LEALFQ) is oligomerization. Residues 1494 to 1509 (ALTTFVSVAGIIYIIY) lie within the membrane without spanning it. Topologically, residues 1510–2183 (KLFAGFQGAY…TLRRKWLDAF (674 aa)) are cytoplasmic. Position 1519 is an O-(5'-phospho-RNA)-tyrosine (tyrosine 1519). A Peptidase C3 domain is found at 1539 to 1717 (GPAFEFAVAM…FSASLLRHYF (179 aa)). Active-site for protease 3C activity residues include histidine 1578, glutamate 1609, and cysteine 1685. The RdRp catalytic domain maps to 1948 to 2064 (GHLRAFDYSG…SYPLPIDASL (117 aa)). Positions 1954 and 2050 each coordinate Mg(2+).

Belongs to the picornaviruses polyprotein family. In terms of assembly, interacts with capsid protein VP1 and capsid protein VP3 to form heterotrimeric protomers. Interacts with capsid protein VP0, and capsid protein VP3 to form heterotrimeric protomers. Five protomers subsequently associate to form pentamers which serve as building blocks for the capsid. Interacts with capsid protein VP2, capsid protein VP3 and capsid protein VP4 following cleavage of capsid protein VP0. Interacts with host CXADR. As to quaternary structure, interacts with capsid protein VP1 and capsid protein VP3 in the mature capsid. In terms of assembly, interacts with capsid protein VP0 and capsid protein VP1 to form heterotrimeric protomers. Five protomers subsequently associate to form pentamers which serve as building blocks for the capsid. Interacts with capsid protein VP4 in the mature capsid. Interacts with protein 2C; this interaction may be important for virion morphogenesis. Interacts with capsid protein VP1 and capsid protein VP3. As to quaternary structure, homodimer. In terms of assembly, homohexamer; forms a hexameric ring structure with 6-fold symmetry characteristic of AAA+ ATPases. Interacts (via N-terminus) with host RTN3 (via reticulon domain); this interaction is important for viral replication. Interacts with capsid protein VP3; this interaction may be important for virion morphogenesis. Interacts with protein 3CD. As to quaternary structure, homodimer. Interacts with host GBF1. Interacts (via GOLD domain) with host ACBD3 (via GOLD domain); this interaction allows the formation of a viral protein 3A/ACBD3 heterotetramer with a 2:2 stoichiometry, which will stimulate the recruitment of host PI4KB in order to synthesize PI4P at the viral RNA replication sites. In terms of assembly, interacts with RNA-directed RNA polymerase. Interacts with protein 3AB and with RNA-directed RNA polymerase. As to quaternary structure, interacts with Viral protein genome-linked and with protein 3CD. The cofactor is Mg(2+). Post-translationally, specific enzymatic cleavages in vivo by the viral proteases yield processing intermediates and the mature proteins. In terms of processing, myristoylation is required for the formation of pentamers during virus assembly. Further assembly of 12 pentamers and a molecule of genomic RNA generates the provirion. During virion maturation, immature virions are rendered infectious following cleavage of VP0 into VP4 and VP2. This maturation seems to be an autocatalytic event triggered by the presence of RNA in the capsid and it is followed by a conformational change infectious virion. Post-translationally, myristoylation is required during RNA encapsidation and formation of the mature virus particle. In terms of processing, VPg is uridylylated by the polymerase into VPg-pUpU. This acts as a nucleotide-peptide primer for the genomic RNA replication.

It is found in the virion. Its subcellular location is the host cytoplasm. The protein resides in the host cytoplasmic vesicle membrane. The protein localises to the host nucleus. It carries out the reaction a ribonucleoside 5'-triphosphate + H2O = a ribonucleoside 5'-diphosphate + phosphate + H(+). The catalysed reaction is Selective cleavage of Tyr-|-Gly bond in the picornavirus polyprotein.. It catalyses the reaction RNA(n) + a ribonucleoside 5'-triphosphate = RNA(n+1) + diphosphate. The enzyme catalyses Selective cleavage of Gln-|-Gly bond in the poliovirus polyprotein. In other picornavirus reactions Glu may be substituted for Gln, and Ser or Thr for Gly.. Replication or transcription is subject to high level of random mutations by the nucleotide analog ribavirin. Forms an icosahedral capsid of pseudo T=3 symmetry with capsid proteins VP2 and VP3. The capsid is 300 Angstroms in diameter, composed of 60 copies of each capsid protein and enclosing the viral positive strand RNA genome. Capsid protein VP1 mainly forms the vertices of the capsid. Capsid protein VP1 interacts with host CXADR to provide virion attachment to target host cells. This attachment induces virion internalization. Tyrosine kinases are probably involved in the entry process. After binding to its receptor, the capsid undergoes conformational changes. Capsid protein VP1 N-terminus (that contains an amphipathic alpha-helix) and capsid protein VP4 are externalized. Together, they shape a pore in the host membrane through which viral genome is translocated to host cell cytoplasm. Functionally, forms an icosahedral capsid of pseudo T=3 symmetry with capsid proteins VP2 and VP3. The capsid is 300 Angstroms in diameter, composed of 60 copies of each capsid protein and enclosing the viral positive strand RNA genome. Its function is as follows. Lies on the inner surface of the capsid shell. After binding to the host receptor, the capsid undergoes conformational changes. Capsid protein VP4 is released, Capsid protein VP1 N-terminus is externalized, and together, they shape a pore in the host membrane through which the viral genome is translocated into the host cell cytoplasm. In terms of biological role, component of immature procapsids, which is cleaved into capsid proteins VP4 and VP2 after maturation. Allows the capsid to remain inactive before the maturation step. Cysteine protease that cleaves viral polyprotein and specific host proteins. It is responsible for the autocatalytic cleavage between the P1 and P2 regions, which is the first cleavage occurring in the polyprotein. Also cleaves the host translation initiation factor EIF4G1, in order to shut down the capped cellular mRNA translation. Inhibits the host nucleus-cytoplasm protein and RNA trafficking by cleaving host members of the nuclear pores. Counteracts stress granule formation probably by antagonizing its assembly or promoting its dissassembly. Cleaves and inhibits host IFIH1/MDA5, thereby inhibiting the type-I IFN production and the establishment of the antiviral state. Cleaves and inhibits host MAVS, thereby inhibiting the type-I IFN production and the establishment of the antiviral state. Functionally, plays an essential role in the virus replication cycle by acting as a viroporin. Creates a pore in the host endoplasmic reticulum and as a consequence releases Ca2+ in the cytoplasm of infected cell. In turn, high levels of cytoplasmic calcium may trigger membrane trafficking and transport of viral ER-associated proteins to viroplasms, sites of viral genome replication. Its function is as follows. Induces and associates with structural rearrangements of intracellular membranes. Displays RNA-binding, nucleotide binding and NTPase activities. May play a role in virion morphogenesis and viral RNA encapsidation by interacting with the capsid protein VP3. In terms of biological role, localizes the viral replication complex to the surface of membranous vesicles. Together with protein 3CD binds the Cis-Active RNA Element (CRE) which is involved in RNA synthesis initiation. Acts as a cofactor to stimulate the activity of 3D polymerase, maybe through a nucleid acid chaperone activity. Localizes the viral replication complex to the surface of membranous vesicles. It inhibits host cell endoplasmic reticulum-to-Golgi apparatus transport and causes the disassembly of the Golgi complex, possibly through GBF1 interaction. This would result in depletion of MHC, trail receptors and IFN receptors at the host cell surface. Plays an essential role in viral RNA replication by recruiting ACBD3 and PI4KB at the viral replication sites, thereby allowing the formation of the rearranged membranous structures where viral replication takes place. Functionally, acts as a primer for viral RNA replication and remains covalently bound to viral genomic RNA. VPg is uridylylated prior to priming replication into VPg-pUpU. The oriI viral genomic sequence may act as a template for this. The VPg-pUpU is then used as primer on the genomic RNA poly(A) by the RNA-dependent RNA polymerase to replicate the viral genome. During genome replication, the VPg-RNA linkage is removed by the host TDP2, thereby accelerating replication. During the late stage of the replication cycle, host TDP2 is excluded from sites of viral RNA synthesis and encapsidation, allowing for the generation of progeny virions. Its function is as follows. Involved in the viral replication complex and viral polypeptide maturation. It exhibits protease activity with a specificity and catalytic efficiency that is different from protease 3C. Protein 3CD lacks polymerase activity. Protein 3CD binds to the 5'UTR of the viral genome. In terms of biological role, replicates the viral genomic RNA on the surface of intracellular membranes. May form linear arrays of subunits that propagate along a strong head-to-tail interaction called interface-I. Covalently attaches UMP to a tyrosine of VPg, which is used to prime RNA synthesis. The positive stranded RNA genome is first replicated at virus induced membranous vesicles, creating a dsRNA genomic replication form. This dsRNA is then used as template to synthesize positive stranded RNA genomes. ss(+)RNA genomes are either translated, replicated or encapsidated. Major viral protease that mediates proteolytic processing of the polyprotein. Cleaves host EIF5B, contributing to host translation shutoff. Also cleaves host PABPC1, contributing to host translation shutoff. Cleaves host NLRP1, triggers host N-glycine-mediated degradation of the autoinhibitory NLRP1 N-terminal fragment. In Coxsackievirus B4 (strain E2), this protein is Genome polyprotein.